Here is a 123-residue protein sequence, read N- to C-terminus: Small ribosomal subunit protein uS12cz/uS12cy/uS12cx/uS12w (123 aa).

Polar residues predominate over residues 1–13 (MPTSNQLLRNSRQ). Residues 1-30 (MPTSNQLLRNSRQPVRKTKKTPALRGCPQR) form a disordered region. Positions 14-30 (PVRKTKKTPALRGCPQR) are enriched in basic residues.

This sequence belongs to the universal ribosomal protein uS12 family. Part of the 30S ribosomal subunit.

The protein localises to the plastid. The protein resides in the chloroplast. Functionally, with S4 and S5 plays an important role in translational accuracy. Located at the interface of the 30S and 50S subunits. This Pelargonium hortorum (Common geranium) protein is Small ribosomal subunit protein uS12cz/uS12cy/uS12cx/uS12w (rps12-A).